Consider the following 142-residue polypeptide: NCT transcriptional regulatory complex subunit B (142 aa).

This sequence belongs to the NC2 beta/DR1 family. In terms of assembly, forms the NCT transcriptional regulatory complex with nctA and mot1.

The protein resides in the nucleus. Its function is as follows. Part of the NCT transcriptional regulatory complex that acts as a key regulator of ergosterol biosynthesis and the azole exporter cdr1B. The NCT complex binds the promoters of genes linked to azole susceptibility, and especially represses the expression of cdr1B transporter. This Aspergillus fumigatus (strain CBS 144.89 / FGSC A1163 / CEA10) (Neosartorya fumigata) protein is NCT transcriptional regulatory complex subunit B.